The sequence spans 409 residues: Transcription termination factor 3, mitochondrial (409 aa).

A mitochondrion-targeting transit peptide spans 1-64 (MALLAQQLSR…KTDRALFSWS (64 aa)). The interval 74–93 (RKSSTNSTLLPSVSEQPEKI) is disordered.

It belongs to the mTERF family.

It localises to the mitochondrion. Functionally, binds promoter DNA and regulates initiation of transcription. Required for normal mitochondrial transcription and translation, and for normal assembly of mitochondrial respiratory complexes. Required for normal mitochondrial function. Maintains 16S rRNA levels and functions in mitochondrial ribosome assembly by regulating the biogenesis of the 39S ribosomal subunit. The polypeptide is Transcription termination factor 3, mitochondrial (Mterf3) (Rattus norvegicus (Rat)).